The chain runs to 843 residues: Protein translocase subunit SecA (843 aa).

ATP-binding positions include Q85, G103–T107, and D490. The tract at residues K799 to K834 is disordered. Over residues V802–R823 the composition is skewed to basic and acidic residues. Positions 827, 829, 838, and 839 each coordinate Zn(2+).

Belongs to the SecA family. In terms of assembly, monomer and homodimer. Part of the essential Sec protein translocation apparatus which comprises SecA, SecYEG and auxiliary proteins SecDF. Other proteins may also be involved. Zn(2+) serves as cofactor.

It localises to the cell membrane. The protein localises to the cytoplasm. It catalyses the reaction ATP + H2O + cellular proteinSide 1 = ADP + phosphate + cellular proteinSide 2.. Part of the Sec protein translocase complex. Interacts with the SecYEG preprotein conducting channel. Has a central role in coupling the hydrolysis of ATP to the transfer of proteins into and across the cell membrane, serving as an ATP-driven molecular motor driving the stepwise translocation of polypeptide chains across the membrane. This chain is Protein translocase subunit SecA, found in Heliobacterium modesticaldum (strain ATCC 51547 / Ice1).